The chain runs to 894 residues: ABC-transporter-regulating transcription factor (894 aa).

A DNA-binding region (zn(2)-C6 fungal-type) is located at residues 71–98 (CDMCRKKKIKCDGKMPKCSHCINYRTDC). Residues 159–174 (NTALNSLKSPTNKFNG) show a composition bias toward polar residues. The interval 159–219 (NTALNSLKSP…PKESETEVEG (61 aa)) is disordered. Residues 175-189 (SSATSQSQHTTASRH) show a composition bias toward low complexity. The segment covering 199-210 (SPHTAATSPNSP) has biased composition (polar residues). The helical transmembrane segment at 649 to 669 (CVWLILYYPVSALVTLFANIL) threads the bilayer. The segment at 724–797 (AEKESHSKKK…MSNPTRAFAP (74 aa)) is disordered. Residues 736 to 750 (AAPDEPQDLRQKTPD) show a composition bias toward basic and acidic residues. 2 stretches are compositionally biased toward polar residues: residues 751–761 (ENSVPSPSTKR) and 771–792 (LFPS…SNPT).

The protein localises to the nucleus. It localises to the membrane. Its function is as follows. Transcription factor that regulates expression of the genes related to resistance to azole compounds. The chain is ABC-transporter-regulating transcription factor from Aspergillus oryzae (strain ATCC 42149 / RIB 40) (Yellow koji mold).